We begin with the raw amino-acid sequence, 890 residues long: DNA mismatch repair protein MutS (890 aa).

607 to 614 contributes to the ATP binding site; that stretch reads GPNMSGKS. Residues 832–851 are disordered; it reads ESQLSFFGGEQSSKKQDKPL.

The protein belongs to the DNA mismatch repair MutS family.

Functionally, this protein is involved in the repair of mismatches in DNA. It is possible that it carries out the mismatch recognition step. This protein has a weak ATPase activity. This chain is DNA mismatch repair protein MutS, found in Bacillus cereus (strain B4264).